The following is a 22-amino-acid chain: Conotoxin MIIIJ (22 aa).

The residue at position 1 (Gln1) is a Pyrrolidone carboxylic acid. Disulfide bonds link Cys3-Cys21, Cys4-Cys19, and Cys9-Cys22.

This sequence belongs to the conotoxin M superfamily. Expressed by the venom duct.

Its subcellular location is the secreted. Functionally, probable competitive antagonist of fish muscle acetylcholine receptor. Inhibits postsynaptic nicotinic acetylcholine receptors (nAChRs) from fish (zebrafish and goldfish) and frogs (IC(50)=0.1 uM). Protects these receptors from block by alpha-bungarotoxin and alpha-conotoxin EI. Does not block nAChRs at the neuromuscular junction of Rana pipiens. Shows a weak inhibition on mammalian adult and fetal muscle nAChRs (alpha-1-beta-1-delta-epsilon/CHRNA1-CHRNB1-CHRND-CHRNE and alpha-1 beta-1 gamma delta/CHRNA1-CHRNB1-CHRNG-CHRND) (IC(50)=3-45 uM). In vivo, induces paralysis in goldfish (Carassius auratus) but not mice. This is Conotoxin MIIIJ from Conus magus (Magical cone).